The sequence spans 267 residues: Glucosamine-6-phosphate deaminase (267 aa).

Aspartate 72 serves as the catalytic Proton acceptor; for enolization step. The active-site For ring-opening step is the aspartate 141. Histidine 143 acts as the Proton acceptor; for ring-opening step in catalysis. Catalysis depends on glutamate 148, which acts as the For ring-opening step.

Belongs to the glucosamine/galactosamine-6-phosphate isomerase family. NagB subfamily. In terms of assembly, homohexamer.

The enzyme catalyses alpha-D-glucosamine 6-phosphate + H2O = beta-D-fructose 6-phosphate + NH4(+). It functions in the pathway amino-sugar metabolism; N-acetylneuraminate degradation; D-fructose 6-phosphate from N-acetylneuraminate: step 5/5. Its activity is regulated as follows. Allosterically activated by N-acetylglucosamine 6-phosphate (GlcNAc6P). In terms of biological role, catalyzes the reversible isomerization-deamination of glucosamine 6-phosphate (GlcN6P) to form fructose 6-phosphate (Fru6P) and ammonium ion. The sequence is that of Glucosamine-6-phosphate deaminase from Mannheimia succiniciproducens (strain KCTC 0769BP / MBEL55E).